A 586-amino-acid chain; its full sequence is Serine/threonine-protein kinase TDA1 (586 aa).

Residues 1 to 26 (MTTASSSASQLQQRLPEEKPWPQLSG) are disordered. A Protein kinase domain is found at 39-351 (VTNHNSLGDG…AKNLKQHPFI (313 aa)). ATP is bound by residues 45–53 (LGDGNFSVV) and Lys68. The active-site Proton acceptor is the Asp180. Residues 503–524 (TTPESRSNFNTPKTLSRQGSST) form a disordered region. The residue at position 504 (Thr504) is a Phosphothreonine. 2 positions are modified to phosphoserine: Ser509 and Ser518. Phosphothreonine is present on Thr538. A Phosphoserine modification is found at Ser578.

It belongs to the protein kinase superfamily. Ser/Thr protein kinase family. As to quaternary structure, interacts with RIM11.

It is found in the cytoplasm. The protein localises to the nucleus. It catalyses the reaction L-seryl-[protein] + ATP = O-phospho-L-seryl-[protein] + ADP + H(+). The catalysed reaction is L-threonyl-[protein] + ATP = O-phospho-L-threonyl-[protein] + ADP + H(+). Functionally, serine/threonine protein kinase shown to have protein phosphorylation activity in vitro. This Saccharomyces cerevisiae (strain ATCC 204508 / S288c) (Baker's yeast) protein is Serine/threonine-protein kinase TDA1 (TDA1).